A 349-amino-acid chain; its full sequence is UDP-N-acetylenolpyruvoylglucosamine reductase (349 aa).

An FAD-binding PCMH-type domain is found at 25–197; it reads GIDARARYAA…VSVTFRLPKR (173 aa). Arg-173 is an active-site residue. Ser-249 acts as the Proton donor in catalysis. Glu-345 is a catalytic residue.

The protein belongs to the MurB family. FAD is required as a cofactor.

Its subcellular location is the cytoplasm. It catalyses the reaction UDP-N-acetyl-alpha-D-muramate + NADP(+) = UDP-N-acetyl-3-O-(1-carboxyvinyl)-alpha-D-glucosamine + NADPH + H(+). It functions in the pathway cell wall biogenesis; peptidoglycan biosynthesis. Functionally, cell wall formation. The protein is UDP-N-acetylenolpyruvoylglucosamine reductase of Burkholderia multivorans (strain ATCC 17616 / 249).